A 535-amino-acid polypeptide reads, in one-letter code: Doublesex- and mab-3-related transcription factor A2 (535 aa).

The segment at residues 69 to 116 is a DNA-binding region (DM); sequence CARCRNHGVVSALKGHKRYCRWKDCLCAKCTLIAERQRVMAAQVALRR. The tract at residues 200–315 is disordered; that stretch reads LQAGRPGSPQ…GGPGPRQRTP (116 aa). In terms of domain architecture, DMA spans 313 to 348; sequence RTPLDILTRVFPGHRRGVLELVLQGCGGDVVQAIEQ.

This sequence belongs to the DMRT family.

The protein localises to the nucleus. May be involved in sexual development. This is Doublesex- and mab-3-related transcription factor A2 (DMRTA2) from Bos taurus (Bovine).